A 445-amino-acid polypeptide reads, in one-letter code: Ubiquitin carboxyl-terminal hydrolase MINDY-3 (445 aa).

Cys-51 (nucleophile) is an active-site residue. Ser-125 carries the post-translational modification Phosphoserine. The Proton acceptor role is filled by His-287.

Belongs to the MINDY deubiquitinase family. FAM188 subfamily. As to quaternary structure, interacts with COPS5.

The protein resides in the nucleus. The catalysed reaction is Thiol-dependent hydrolysis of ester, thioester, amide, peptide and isopeptide bonds formed by the C-terminal Gly of ubiquitin (a 76-residue protein attached to proteins as an intracellular targeting signal).. In terms of biological role, hydrolase that can remove 'Lys-48'-linked conjugated ubiquitin from proteins. The polypeptide is Ubiquitin carboxyl-terminal hydrolase MINDY-3 (MINDY3) (Bos taurus (Bovine)).